Reading from the N-terminus, the 48-residue chain is Delta-stichotoxin-Hmg4a (48 aa).

3 cysteine pairs are disulfide-bonded: Cys3–Cys43, Cys5–Cys33, and Cys26–Cys44.

Belongs to the sea anemone sodium channel inhibitory toxin family. Type II subfamily.

The protein resides in the secreted. Its subcellular location is the nematocyst. Binds specifically to voltage-gated sodium channels (Nav), thereby delaying their inactivation during signal transduction. Its toxicity is weaker than that of RpIII (AC P08380). The protein is Delta-stichotoxin-Hmg4a of Heteractis magnifica (Magnificent sea anemone).